The primary structure comprises 708 residues: Glycine--tRNA ligase beta subunit (708 aa).

Belongs to the class-II aminoacyl-tRNA synthetase family. As to quaternary structure, tetramer of two alpha and two beta subunits.

It localises to the cytoplasm. It catalyses the reaction tRNA(Gly) + glycine + ATP = glycyl-tRNA(Gly) + AMP + diphosphate. The polypeptide is Glycine--tRNA ligase beta subunit (Paracidovorax citrulli (strain AAC00-1) (Acidovorax citrulli)).